Here is a 33-residue protein sequence, read N- to C-terminus: Large ribosomal subunit protein eL28 (33 aa).

Belongs to the eukaryotic ribosomal protein eL28 family. Component of the large ribosomal subunit.

The protein localises to the cytoplasm. Functionally, component of the large ribosomal subunit. The ribosome is a large ribonucleoprotein complex responsible for the synthesis of proteins in the cell. In Xenopus laevis (African clawed frog), this protein is Large ribosomal subunit protein eL28 (rpl28).